A 276-amino-acid chain; its full sequence is Large ribosomal subunit protein uL2c (276 aa).

Disordered regions lie at residues 1–51 and 224–276; these read MAIR…GIIT and VVMN…RRRK. Polar residues-rich tracts occupy residues 7 to 18 and 27 to 37; these read RTYTPSTRNRPI and SNPQKKLTSGQ.

The protein belongs to the universal ribosomal protein uL2 family. Part of the 50S ribosomal subunit.

The protein resides in the plastid. Its subcellular location is the chloroplast. The chain is Large ribosomal subunit protein uL2c (rpl2) from Cycas taitungensis (Prince sago).